The sequence spans 510 residues: Light-independent protochlorophyllide reductase subunit B (510 aa).

D36 serves as a coordination point for [4Fe-4S] cluster. Residue D296 is the Proton donor of the active site. 431 to 432 (GM) lines the substrate pocket.

This sequence belongs to the ChlB/BchB/BchZ family. As to quaternary structure, protochlorophyllide reductase is composed of three subunits; ChlL, ChlN and ChlB. Forms a heterotetramer of two ChlB and two ChlN subunits. [4Fe-4S] cluster is required as a cofactor.

The enzyme catalyses chlorophyllide a + oxidized 2[4Fe-4S]-[ferredoxin] + 2 ADP + 2 phosphate = protochlorophyllide a + reduced 2[4Fe-4S]-[ferredoxin] + 2 ATP + 2 H2O. Its pathway is porphyrin-containing compound metabolism; chlorophyll biosynthesis (light-independent). Component of the dark-operative protochlorophyllide reductase (DPOR) that uses Mg-ATP and reduced ferredoxin to reduce ring D of protochlorophyllide (Pchlide) to form chlorophyllide a (Chlide). This reaction is light-independent. The NB-protein (ChlN-ChlB) is the catalytic component of the complex. This chain is Light-independent protochlorophyllide reductase subunit B, found in Synechococcus sp. (strain JA-3-3Ab) (Cyanobacteria bacterium Yellowstone A-Prime).